Reading from the N-terminus, the 88-residue chain is MATKIRLARAGAKKKPFYQVVVADERCKRDGRFIENVGTYDPNQNPAVFKLEEGKTLEWLGKGAQPTDTVKQILKKAGIWEKFVSKLA.

It belongs to the bacterial ribosomal protein bS16 family.

The sequence is that of Small ribosomal subunit protein bS16 from Geotalea daltonii (strain DSM 22248 / JCM 15807 / FRC-32) (Geobacter daltonii).